Here is a 407-residue protein sequence, read N- to C-terminus: Tryptophan synthase beta chain (407 aa).

Residue lysine 91 is modified to N6-(pyridoxal phosphate)lysine.

The protein belongs to the TrpB family. Tetramer of two alpha and two beta chains. Pyridoxal 5'-phosphate serves as cofactor.

The catalysed reaction is (1S,2R)-1-C-(indol-3-yl)glycerol 3-phosphate + L-serine = D-glyceraldehyde 3-phosphate + L-tryptophan + H2O. Its pathway is amino-acid biosynthesis; L-tryptophan biosynthesis; L-tryptophan from chorismate: step 5/5. In terms of biological role, the beta subunit is responsible for the synthesis of L-tryptophan from indole and L-serine. In Streptococcus pneumoniae (strain P1031), this protein is Tryptophan synthase beta chain.